Consider the following 376-residue polypeptide: Pyrimidine monooxygenase RutA (376 aa).

FMN contacts are provided by residues 61 to 62 (IK), asparagine 127, glutamate 136, 152 to 153 (RY), and serine 202.

It belongs to the NtaA/SnaA/DszA monooxygenase family. RutA subfamily.

It catalyses the reaction uracil + FMNH2 + NADH + O2 = (Z)-3-ureidoacrylate + FMN + NAD(+) + H2O + H(+). It carries out the reaction thymine + FMNH2 + NADH + O2 = (Z)-2-methylureidoacrylate + FMN + NAD(+) + H2O + H(+). Catalyzes the pyrimidine ring opening between N-3 and C-4 by an unusual flavin hydroperoxide-catalyzed mechanism, adding oxygen atoms in the process to yield ureidoacrylate peracid, that immediately reacts with FMN forming ureidoacrylate and FMN-N(5)-oxide. The FMN-N(5)-oxide reacts spontaneously with NADH to produce FMN. Requires the flavin reductase RutF to regenerate FMN in vivo. This Methylorubrum extorquens (strain CM4 / NCIMB 13688) (Methylobacterium extorquens) protein is Pyrimidine monooxygenase RutA.